Reading from the N-terminus, the 99-residue chain is Acylphosphatase-1 (99 aa).

In terms of domain architecture, Acylphosphatase-like spans 9–99; the sequence is SVDYEVFGKV…LEHSTFSICK (91 aa). Residues arginine 24 and asparagine 42 contribute to the active site.

Belongs to the acylphosphatase family.

The catalysed reaction is an acyl phosphate + H2O = a carboxylate + phosphate + H(+). The protein is Acylphosphatase-1 (acyp1) of Xenopus laevis (African clawed frog).